Consider the following 427-residue polypeptide: Glutamate-1-semialdehyde 2,1-aminomutase (427 aa).

Position 265 is an N6-(pyridoxal phosphate)lysine (lysine 265).

This sequence belongs to the class-III pyridoxal-phosphate-dependent aminotransferase family. HemL subfamily. Homodimer. Requires pyridoxal 5'-phosphate as cofactor.

The protein resides in the cytoplasm. It carries out the reaction (S)-4-amino-5-oxopentanoate = 5-aminolevulinate. The protein operates within porphyrin-containing compound metabolism; protoporphyrin-IX biosynthesis; 5-aminolevulinate from L-glutamyl-tRNA(Glu): step 2/2. The chain is Glutamate-1-semialdehyde 2,1-aminomutase from Burkholderia thailandensis (strain ATCC 700388 / DSM 13276 / CCUG 48851 / CIP 106301 / E264).